Reading from the N-terminus, the 583-residue chain is Long-chain-fatty-acid--AMP ligase FadD26 (583 aa).

This sequence belongs to the ATP-dependent AMP-binding enzyme family.

The catalysed reaction is holo-[(phenol)carboxyphthiodiolenone synthase] + a long-chain fatty acid + ATP = a long-chain fatty acyl-[(phenol)carboxyphthiodiolenone synthase] + AMP + diphosphate. It carries out the reaction eicosanoate + holo-[(phenol)carboxyphthiodiolenone synthase] + ATP = icosanoyl-[(phenol)carboxyphthiodiolenone synthase] + AMP + diphosphate. The enzyme catalyses holo-[(phenol)carboxyphthiodiolenone synthase] + docosanoate + ATP = docosanoyl-[(phenol)carboxyphthiodiolenone synthase] + AMP + diphosphate. Its pathway is lipid metabolism; fatty acid biosynthesis. Catalyzes the activation of long-chain fatty acids as acyl-adenylates (acyl-AMP), which are then transferred to the multifunctional polyketide synthase PpsA for further chain extension. Catalyzes the adenylation of the long-chain fatty acids eicosanoate (C20) or docosanoate (C22), and potentially the very-long-chain fatty acid lignocerate (C24). Involved in the biosynthesis of phthiocerol dimycocerosate (DIM A) and phthiodiolone dimycocerosate (DIM B). This is Long-chain-fatty-acid--AMP ligase FadD26 (fadD26) from Mycobacterium bovis (strain ATCC BAA-935 / AF2122/97).